The sequence spans 189 residues: Ribosome maturation factor RimM (189 aa).

Positions 95 to 177 (EDDEFYYADL…AGLVDDPEEL (83 aa)) constitute a PRC barrel domain.

This sequence belongs to the RimM family. As to quaternary structure, binds ribosomal protein uS19.

The protein resides in the cytoplasm. Its function is as follows. An accessory protein needed during the final step in the assembly of 30S ribosomal subunit, possibly for assembly of the head region. Essential for efficient processing of 16S rRNA. May be needed both before and after RbfA during the maturation of 16S rRNA. It has affinity for free ribosomal 30S subunits but not for 70S ribosomes. The protein is Ribosome maturation factor RimM of Rhizobium leguminosarum bv. trifolii (strain WSM2304).